The sequence spans 463 residues: Elongation factor 1-alpha (463 aa).

The tr-type G domain maps to 8 to 245 (KTHLNIVIIG…DALVPPVRPA (238 aa)). The tract at residues 17–24 (GHVDSGKS) is G1. 17-24 (GHVDSGKS) contacts GTP. The G2 stretch occupies residues 73 to 77 (GITID). Residues 94 to 97 (DAPG) are G3. GTP is bound by residues 94 to 98 (DAPGH) and 156 to 159 (NKMD). A G4 region spans residues 156–159 (NKMD). Residues 197–199 (SGW) are G5.

It belongs to the TRAFAC class translation factor GTPase superfamily. Classic translation factor GTPase family. EF-Tu/EF-1A subfamily. As to quaternary structure, the 42S RNP particle comprises four subunits each of which contains one molecule of 5S RNA, three molecules of tRNA, two molecules of EF1-alpha and one molecule of the 5S RNA binding protein 43.

Its subcellular location is the cytoplasm. Functionally, this protein is one of two protein components of a 42S RNP particle that is very abundant in previtellogenic oocytes. A major function served by 42sp50 appears to be the storage of tRNAs for later use in oogenesis and early embryogenesis. Purified 42S particles can directly transfer aminoacyl tRNA to ribosomes. In Xenopus laevis (African clawed frog), this protein is Elongation factor 1-alpha.